Here is a 453-residue protein sequence, read N- to C-terminus: Glutamyl-tRNA(Gln) amidotransferase subunit A (453 aa).

Active-site charge relay system residues include K53 and S128. The active-site Acyl-ester intermediate is the S152.

It belongs to the amidase family. GatA subfamily. Heterotrimer of A, B and C subunits.

It carries out the reaction L-glutamyl-tRNA(Gln) + L-glutamine + ATP + H2O = L-glutaminyl-tRNA(Gln) + L-glutamate + ADP + phosphate + H(+). Its function is as follows. Allows the formation of correctly charged Gln-tRNA(Gln) through the transamidation of misacylated Glu-tRNA(Gln) in organisms which lack glutaminyl-tRNA synthetase. The reaction takes place in the presence of glutamine and ATP through an activated gamma-phospho-Glu-tRNA(Gln). In Helicobacter pylori (strain G27), this protein is Glutamyl-tRNA(Gln) amidotransferase subunit A.